Here is a 28-residue protein sequence, read N- to C-terminus: Toxin a (28 aa).

Positions V3–I28 constitute an LCN-type CS-alpha/beta domain.

It belongs to the long (3 C-C) scorpion toxin superfamily. As to expression, expressed by the venom gland.

Its subcellular location is the secreted. In terms of biological role, binds to sodium channels (Nav) and affects the channel activation process. In Androctonus crassicauda (Arabian fat-tailed scorpion), this protein is Toxin a.